Consider the following 490-residue polypeptide: B3 domain-containing protein LOC_Os12g40080 (490 aa).

The TF-B3 1 DNA-binding region spans 24 to 117 (GKSFIKVMIT…HFKVWIYDPS (94 aa)). A disordered region spans residues 161–191 (SGHSKETSEINPANSPSWKPTERVPSSEELD). The segment covering 169 to 178 (EINPANSPSW) has biased composition (polar residues). 2 consecutive DNA-binding regions (TF-B3) follow at residues 236–331 (FYIT…FHPL) and 389–487 (VAVM…IRKS).

The protein resides in the nucleus. The sequence is that of B3 domain-containing protein LOC_Os12g40080 from Oryza sativa subsp. japonica (Rice).